The sequence spans 273 residues: NAD-dependent protein deacylase (273 aa).

A Deacetylase sirtuin-type domain is found at 20-272 (RERLRQRIFF…PEFVEKLLKG (253 aa)). 48–67 (GAGISAESGIRTFRAADGLW) is a binding site for NAD(+). Substrate contacts are provided by Tyr92 and Arg95. NAD(+) is bound at residue 129 to 132 (QNID). His147 (proton acceptor) is an active-site residue. Zn(2+) is bound by residues Cys155 and Cys174. NAD(+)-binding positions include 214-216 (GTS), 240-242 (NLE), and Ala258.

It belongs to the sirtuin family. Class III subfamily. Requires Zn(2+) as cofactor.

The protein resides in the cytoplasm. It catalyses the reaction N(6)-acetyl-L-lysyl-[protein] + NAD(+) + H2O = 2''-O-acetyl-ADP-D-ribose + nicotinamide + L-lysyl-[protein]. It carries out the reaction N(6)-succinyl-L-lysyl-[protein] + NAD(+) + H2O = 2''-O-succinyl-ADP-D-ribose + nicotinamide + L-lysyl-[protein]. The enzyme catalyses N(6)-(2-hydroxyisobutanoyl)-L-lysyl-[protein] + NAD(+) + H2O = 2''-O-(2-hydroxyisobutanoyl)-ADP-D-ribose + nicotinamide + L-lysyl-[protein]. In terms of biological role, NAD-dependent lysine deacetylase that specifically removes acetyl groups on target proteins. Also acts as a protein-lysine deacylase by mediating protein desuccinylation and de-2-hydroxyisobutyrylation. Modulates the activities of several proteins which are inactive in their acylated form. The polypeptide is NAD-dependent protein deacylase (Escherichia coli O157:H7).